The sequence spans 350 residues: WD repeat-containing protein DWA2 (350 aa).

WD repeat units follow at residues 39-79 (KEEN…FDQR), 118-158 (AHVG…KSAE), 166-205 (GMRHSLSGGAWNPHDVNSVAATSESSIQFWDLRTMKKNNS), 206-246 (IERA…FPVQ), 250-290 (GHTH…EHKT), and 311-350 (DYEDSVYGLAWSSREPWIFASLSYDGRVVIESVKPFLPRR).

As to quaternary structure, interacts with ABI5 and DDB1A and DWA1.

It is found in the nucleus. Its pathway is protein modification; protein ubiquitination. Component of the CUL4-RBX1-DDB1-DWA1/DWA2 E3 ubiquitin-protein ligase complex that acts as a negative regulator in abscisic acid (ABA) signaling. May function as the substrate recognition module within this complex leading to ABI5 degradation. Functionally redundant with DWA1. The sequence is that of WD repeat-containing protein DWA2 (DWA2) from Arabidopsis thaliana (Mouse-ear cress).